We begin with the raw amino-acid sequence, 1562 residues long: Neuralized-like protein 4 (1562 aa).

Gly residues predominate over residues 1–42; it reads MAAGSGGSGGSGGGPGPGPGGGGGPSGSGSGPGSNGGLGSGG. Disordered stretches follow at residues 1–48 and 207–236; these read MAAG…HPRT and PEPG…LAEQ. NHR domains lie at 41–207 and 317–484; these read GGEL…VLPP and ALLF…IVHN. Pro residues predominate over residues 207–224; that stretch reads PEPGFSPPTPIPTPPLEP. Serine 502 bears the Phosphoserine mark. NHR domains follow at residues 520 to 686 and 716 to 884; these read RLLF…IVDD and DLRF…ITNA. Residues 691 to 716 are disordered; it reads PVPEPLPEGNNQVSPSSPSSGAGGSD. Serine 907 bears the Phosphoserine mark. Residues 913–1086 enclose the NHR 5 domain; it reads AHRFHSTCGK…PVRGVSIVSS (174 aa). Residues 1086–1123 form a disordered region; that stretch reads STRLEESEGTQPPSPSSDTGSEGEEDDEGEEHGLGGQN. Residues 1106-1115 are compositionally biased toward acidic residues; sequence SEGEEDDEGE. Residues 1131–1294 enclose the NHR 6 domain; it reads TLEFLENHGK…QCEQVTIVNP (164 aa).

As to quaternary structure, interacts with CCP110; this interaction propmotes CCP110 ubiquitination and degradation via the proteasome pathway. Via its interaction with CCP110, may indirectly interact with CEP97. Interacts with the E3 ubiquitin-protein ligase HERC2 and UBE3A. May interact with MAPK6 and hence mediate MAPK6 interaction with UBE3A. Interaction with UBE3A may be indirect and mediated by HERC2. Ubiquitinated; undergoes HERC2-dependent 'Lys-48' ubiquitination. This ubiquitination leads to proteasomal degradation. Widely expressed at high levels (including brain).

The protein resides in the cytoplasm. It localises to the cytoskeleton. Its subcellular location is the microtubule organizing center. It is found in the centrosome. The protein localises to the centriole. Its function is as follows. Promotes CCP110 ubiquitination and proteasome-dependent degradation. By counteracting accumulation of CP110, maintains normal centriolar homeostasis and preventing formation of ectopic microtubular organizing centers. The protein is Neuralized-like protein 4 (NEURL4) of Homo sapiens (Human).